Reading from the N-terminus, the 148-residue chain is MILRGCTMALERYNVSQPKRQAERGENTADPALAAGRACSTAELVARRLGIAAVQPVYRFLDTWWRKGCWSGEITRLTAVRSACGADAARGGVLVRRGRAADGHYSVSCRRGVCAQLPRTGWPFELLRLAMEGNSRGAPAGGTCTVLP.

Functionally, this protein is essential to promote the specific transfer of the plasmid in the presence of conjugative plasmids. This is Mobilization protein MobB (mobB) from Escherichia coli.